Consider the following 419-residue polypeptide: Serine--tRNA ligase (419 aa).

Thr225–Glu227 contributes to the L-serine binding site. Arg256–Glu258 serves as a coordination point for ATP. Glu279 provides a ligand contact to L-serine. Glu343–Ser346 provides a ligand contact to ATP. Residue Ser378 participates in L-serine binding.

It belongs to the class-II aminoacyl-tRNA synthetase family. Type-1 seryl-tRNA synthetase subfamily. As to quaternary structure, homodimer. The tRNA molecule binds across the dimer.

The protein resides in the cytoplasm. The enzyme catalyses tRNA(Ser) + L-serine + ATP = L-seryl-tRNA(Ser) + AMP + diphosphate + H(+). The catalysed reaction is tRNA(Sec) + L-serine + ATP = L-seryl-tRNA(Sec) + AMP + diphosphate + H(+). Its pathway is aminoacyl-tRNA biosynthesis; selenocysteinyl-tRNA(Sec) biosynthesis; L-seryl-tRNA(Sec) from L-serine and tRNA(Sec): step 1/1. Catalyzes the attachment of serine to tRNA(Ser). Is also able to aminoacylate tRNA(Sec) with serine, to form the misacylated tRNA L-seryl-tRNA(Sec), which will be further converted into selenocysteinyl-tRNA(Sec). This Pelagibacter ubique (strain HTCC1062) protein is Serine--tRNA ligase.